The chain runs to 185 residues: Thymidine kinase (185 aa).

ATP is bound by residues 7–14 (GPMFAGKT) and 83–86 (DEIQ). Glutamate 84 (proton acceptor) is an active-site residue. Residues cysteine 139, cysteine 142, cysteine 177, and histidine 180 each coordinate Zn(2+).

It belongs to the thymidine kinase family. Homotetramer.

The protein resides in the cytoplasm. The enzyme catalyses thymidine + ATP = dTMP + ADP + H(+). In Pyrobaculum aerophilum (strain ATCC 51768 / DSM 7523 / JCM 9630 / CIP 104966 / NBRC 100827 / IM2), this protein is Thymidine kinase.